Reading from the N-terminus, the 375-residue chain is Acetylornithine aminotransferase (375 aa).

Pyridoxal 5'-phosphate-binding positions include 102–103 (GA) and phenylalanine 129. Arginine 132 provides a ligand contact to N(2)-acetyl-L-ornithine. A pyridoxal 5'-phosphate-binding site is contributed by 214-217 (DEVQ). Position 243 is an N6-(pyridoxal phosphate)lysine (lysine 243). Serine 271 is a N(2)-acetyl-L-ornithine binding site. Threonine 272 contacts pyridoxal 5'-phosphate.

This sequence belongs to the class-III pyridoxal-phosphate-dependent aminotransferase family. ArgD subfamily. Homodimer. The cofactor is pyridoxal 5'-phosphate.

Its subcellular location is the cytoplasm. The enzyme catalyses N(2)-acetyl-L-ornithine + 2-oxoglutarate = N-acetyl-L-glutamate 5-semialdehyde + L-glutamate. It functions in the pathway amino-acid biosynthesis; L-arginine biosynthesis; N(2)-acetyl-L-ornithine from L-glutamate: step 4/4. The sequence is that of Acetylornithine aminotransferase from Archaeoglobus fulgidus (strain ATCC 49558 / DSM 4304 / JCM 9628 / NBRC 100126 / VC-16).